The chain runs to 183 residues: MENLIEEILKQIGEDPNREGLVKTPNRVKKAYDFLTSGYKADINQLVNGAIFEENTTGMVLVRDIEMYSLCEHHLLPFYGRAHVAYIPNKKIIGISKIPRIVDVFARRLQVQERLTDQIAQAIQETLDPLGVGVVIKAKHLCMMMRGVEKQNSELFTSSLLGLFKTDPTTRSEFLDLIRTGSH.

Zn(2+)-binding residues include Cys-71, His-74, and Cys-142.

It belongs to the GTP cyclohydrolase I family. As to quaternary structure, homomer.

It carries out the reaction GTP + H2O = 7,8-dihydroneopterin 3'-triphosphate + formate + H(+). The protein operates within cofactor biosynthesis; 7,8-dihydroneopterin triphosphate biosynthesis; 7,8-dihydroneopterin triphosphate from GTP: step 1/1. The sequence is that of GTP cyclohydrolase 1 from Leptospira biflexa serovar Patoc (strain Patoc 1 / Ames).